The primary structure comprises 357 residues: tRNA N6-adenosine threonylcarbamoyltransferase (357 aa).

Positions 116 and 120 each coordinate Fe cation. Residues 139–143, D172, G185, and N284 each bind substrate; that span reads LVSGG. Residue D312 participates in Fe cation binding.

This sequence belongs to the KAE1 / TsaD family. The cofactor is Fe(2+).

It is found in the cytoplasm. The enzyme catalyses L-threonylcarbamoyladenylate + adenosine(37) in tRNA = N(6)-L-threonylcarbamoyladenosine(37) in tRNA + AMP + H(+). In terms of biological role, required for the formation of a threonylcarbamoyl group on adenosine at position 37 (t(6)A37) in tRNAs that read codons beginning with adenine. Is involved in the transfer of the threonylcarbamoyl moiety of threonylcarbamoyl-AMP (TC-AMP) to the N6 group of A37, together with TsaE and TsaB. TsaD likely plays a direct catalytic role in this reaction. This Synechococcus sp. (strain CC9605) protein is tRNA N6-adenosine threonylcarbamoyltransferase.